The sequence spans 86 residues: Large ribosomal subunit protein bL28 (86 aa).

Belongs to the bacterial ribosomal protein bL28 family.

This Phocaeicola vulgatus (strain ATCC 8482 / DSM 1447 / JCM 5826 / CCUG 4940 / NBRC 14291 / NCTC 11154) (Bacteroides vulgatus) protein is Large ribosomal subunit protein bL28.